The following is a 549-amino-acid chain: DNA 3'-5' helicase XPB (549 aa).

The interval 1–130 (MTDGPLIVQS…RNKKIAPMLG (130 aa)) is required for protein stability or solubility. Residues 190-344 (ADSFWAGGSG…DVFSLIGPKR (155 aa)) enclose the Helicase ATP-binding domain. 203–210 (LPCGAGKT) contributes to the ATP binding site. The DEAH box signature appears at 298 to 301 (DEVH). The region spanning 399–545 (VVKSILAKHP…YIIRDADDLL (147 aa)) is the Helicase C-terminal domain.

The protein belongs to the helicase family. RAD25/XPB subfamily. As to quaternary structure, monomer. It depends on Mn(2+) as a cofactor. Mg(2+) is required as a cofactor.

It catalyses the reaction Couples ATP hydrolysis with the unwinding of duplex DNA by translocating in the 3'-5' direction.. The enzyme catalyses ATP + H2O = ADP + phosphate + H(+). Its function is as follows. ATP-dependent 3'-5' DNA helicase, unwinds 3'-overhangs, 3'- flaps, and splayed-arm DNA substrates but not 5'-overhangs, 5'-flap substrates, 3-way junctions or Holliday junctions. Not highly efficient in vitro. Requires ATP hydrolysis for helicase activity; the ATPase activity is DNA-dependent and requires a minimum of 4 single-stranded nucleotides (nt) with 6-10 nt providing all necessary interactions for full processive unwinding. The ATPase prefers ATP over CTP or GTP, is almost inactive with TTP. DNA helicase activity requires ATP or dATP and only acts when the 3'-overhang is &gt;20 nt. Capable of unwinding a DNA:RNA hybrid if the 3'-overhang is DNA. Also catalyzes ATP-independent annealing of complementary DNA strands; annealing requires Mg(2+). The protein is DNA 3'-5' helicase XPB of Mycobacterium tuberculosis (strain ATCC 25618 / H37Rv).